A 618-amino-acid chain; its full sequence is Probable arginine--tRNA ligase, cytoplasmic (618 aa).

2 interaction with tRNA regions span residues 60 to 61 and 104 to 109; these read ET and NGIFLR. Residues 146-151, His160, Tyr359, Asp363, and Gln387 contribute to the L-arginine site; that span reads EFSSPN. Residues 149–160 carry the 'HIGH' region motif; that stretch reads SPNIAKPFHAGH. The interaction with tRNA stretch occupies residues 496–510; the sequence is DTGPYLQYAHSRLSS.

The protein belongs to the class-I aminoacyl-tRNA synthetase family.

It is found in the cytoplasm. The enzyme catalyses tRNA(Arg) + L-arginine + ATP = L-arginyl-tRNA(Arg) + AMP + diphosphate. In terms of biological role, forms part of a macromolecular complex that catalyzes the attachment of specific amino acids to cognate tRNAs during protein synthesis. This chain is Probable arginine--tRNA ligase, cytoplasmic (mrs1), found in Schizosaccharomyces pombe (strain 972 / ATCC 24843) (Fission yeast).